Reading from the N-terminus, the 139-residue chain is D-ribose pyranase (139 aa).

The active-site Proton donor is the H20. Residues D28, H106, and 128 to 130 (YAN) contribute to the substrate site.

This sequence belongs to the RbsD / FucU family. RbsD subfamily. Homodecamer.

The protein localises to the cytoplasm. It catalyses the reaction beta-D-ribopyranose = beta-D-ribofuranose. It participates in carbohydrate metabolism; D-ribose degradation; D-ribose 5-phosphate from beta-D-ribopyranose: step 1/2. In terms of biological role, catalyzes the interconversion of beta-pyran and beta-furan forms of D-ribose. In Escherichia coli O6:H1 (strain CFT073 / ATCC 700928 / UPEC), this protein is D-ribose pyranase.